Reading from the N-terminus, the 613-residue chain is Putative adenosylhomocysteinase 3 (613 aa).

2 stretches are compositionally biased toward low complexity: residues 1-14 (MSVQVVSAAAAAKV) and 35-44 (AAAVGAMVPP). Positions 1–186 (MSVQVVSAAA…KQQKNSKGSS (186 aa)) are disordered. Ser2 is subject to N-acetylserine. The interval 2-111 (SVQVVSAAAA…DGGEALVSPD (110 aa)) is LISN domain, inhibits interaction with ITPR1. Residues 52 to 68 (APAPAPAAERPPAPGPG) show a composition bias toward pro residues. The segment covering 70 to 80 (GPTAALSPAAG) has biased composition (low complexity). Ser109 bears the Phosphoserine mark. A compositionally biased stretch (basic residues) spans 137–146 (RPTKIGRRSL). The span at 147 to 166 (SRSISQSSTDSYSSAASYTD) shows a compositional bias: low complexity. Phosphoserine is present on residues Ser151, Ser154, Ser157, and Ser160. Substrate contacts are provided by Thr238, Asp312, and Glu337. 338–340 (SVT) contacts NAD(+). Substrate-binding residues include Lys367 and Asp371. NAD(+)-binding positions include Asn372, 403-408 (GEVGKG), Glu424, Asn459, 480-482 (MGH), and Asn527.

The protein belongs to the adenosylhomocysteinase family. Homotetramer. Forms heteromultimers with AHCYL1 (via the C-terminal region). Interacts with ITPR1; with lower affinity than AHCYL1 and maybe via ITPR1. Interacts with SLC4A4. Interacts with ZCCHC4. It depends on NAD(+) as a cofactor. Phosphorylated during neuronal differentiation at the LISN domain. In terms of tissue distribution, highly expressed in cerebrum, cerebellum and kidney. Also expressed in thymus, spleen, testis, ovary and, at lower, levels in lung and liver (at protein level). In cerebellum, expressed in interneurons.

It is found in the cytoplasm. The protein localises to the microsome. It carries out the reaction S-adenosyl-L-homocysteine + H2O = L-homocysteine + adenosine. It participates in amino-acid biosynthesis; L-homocysteine biosynthesis; L-homocysteine from S-adenosyl-L-homocysteine: step 1/1. May regulate the electrogenic sodium/bicarbonate cotransporter SLC4A4 activity and Mg(2+)-sensitivity. On the contrary of its homolog AHCYL1, does not regulate ITPR1 sensitivity to inositol 1,4,5-trisphosphate. In Mus musculus (Mouse), this protein is Putative adenosylhomocysteinase 3 (Ahcyl2).